A 45-amino-acid polypeptide reads, in one-letter code: Host translation inhibitor E66L (45 aa).

The protein belongs to the asfivirus E66L family.

The protein resides in the host endoplasmic reticulum. In terms of biological role, inhibits host protein translation, probably through the EIF2AK2/EIF2S1 signaling pathway. Promotes cell retention in the G0/G1 phase. This chain is Host translation inhibitor E66L, found in Ornithodoros (relapsing fever ticks).